We begin with the raw amino-acid sequence, 439 residues long: GTPase Der (439 aa).

EngA-type G domains are found at residues 2–168 (ATVL…EEKG) and 181–357 (IKVA…ASYT). GTP contacts are provided by residues 8-15 (GKPNVGKS), 55-59 (DTCGV), 118-121 (NKTE), 187-194 (GRPNVGKS), 234-238 (DTAGL), and 300-303 (NKWD). A KH-like domain is found at 358–439 (TKVPSSAINS…PIFLKFKRSR (82 aa)).

This sequence belongs to the TRAFAC class TrmE-Era-EngA-EngB-Septin-like GTPase superfamily. EngA (Der) GTPase family. As to quaternary structure, associates with the 50S ribosomal subunit.

Its function is as follows. GTPase that plays an essential role in the late steps of ribosome biogenesis. The chain is GTPase Der from Thermotoga petrophila (strain ATCC BAA-488 / DSM 13995 / JCM 10881 / RKU-1).